We begin with the raw amino-acid sequence, 201 residues long: MARGPRYRVPFRRRREGKTNYHKRLKLLKSKKPRLVVRKSLNHHIAQIIVYNPKGDRTIVSAHTRELIRDFGWKGHTGNTPSAYLLGLLIGYKAKKAGIEEAILDIGLHPPTRGSSVFAVLKGAVDAGLNVPHSEEIFPEDYRIRGEHVAEYAKALKQEDETLYRKQFGGYLVKGLEPEKLPEHFEEVKAKIIEKFEGARE.

The protein belongs to the universal ribosomal protein uL18 family. Part of the 50S ribosomal subunit. Contacts the 5S and 23S rRNAs.

In terms of biological role, this is one of the proteins that bind and probably mediate the attachment of the 5S RNA into the large ribosomal subunit, where it forms part of the central protuberance. The protein is Large ribosomal subunit protein uL18 of Thermococcus gammatolerans (strain DSM 15229 / JCM 11827 / EJ3).